Here is a 570-residue protein sequence, read N- to C-terminus: Methyl-coenzyme M reductase subunit alpha (570 aa).

Gln161 is a binding site for coenzyme F430. Coenzyme B-binding positions include Arg239, 270-271 (KH), and Arg284. His271 carries the post-translational modification Pros-methylhistidine. Residue Arg285 is modified to 5-methylarginine. Tyr346 and Phe464 together coordinate coenzyme M. Gly465 is subject to 1-thioglycine. (Z)-2,3-didehydroaspartate is present on Asp470. Cys472 is subject to S-methylcysteine.

It belongs to the methyl-coenzyme M reductase alpha subunit family. In terms of assembly, MCR is a hexamer of two alpha, two beta, and two gamma chains, forming a dimer of heterotrimers. It depends on coenzyme F430 as a cofactor. Post-translationally, the alpha subunit contains five modified amino acids near the active site region. Is methylated on His-271, Arg-285 and Cys-472, probably by the action of specific S-adenosylmethionine-dependent methyltransferases. Also contains a thioglycine at position 465, forming a thiopeptide bond. Contains a didehydroaspartate residue at position 470. The methylation on C5 of Arg-285 is a post-translational methylation not essential in vivo, but which plays a role for the stability and structural integrity of MCR. Does not show a methylation at Gln-420, as shown for M.marburgensis.

The protein resides in the cytoplasm. It catalyses the reaction coenzyme B + methyl-coenzyme M = methane + coenzyme M-coenzyme B heterodisulfide. The protein operates within one-carbon metabolism; methyl-coenzyme M reduction; methane from methyl-coenzyme M: step 1/1. Its function is as follows. Component of the methyl-coenzyme M reductase (MCR) I that catalyzes the reductive cleavage of methyl-coenzyme M (CoM-S-CH3 or 2-(methylthio)ethanesulfonate) using coenzyme B (CoB or 7-mercaptoheptanoylthreonine phosphate) as reductant which results in the production of methane and the mixed heterodisulfide of CoB and CoM (CoM-S-S-CoB). This is the final step in methanogenesis. The chain is Methyl-coenzyme M reductase subunit alpha (mcrA) from Methanosarcina barkeri (strain Fusaro / DSM 804).